Consider the following 95-residue polypeptide: UPF0358 protein GTNG_0942 (95 aa).

This sequence belongs to the UPF0358 family.

The protein is UPF0358 protein GTNG_0942 of Geobacillus thermodenitrificans (strain NG80-2).